The primary structure comprises 596 residues: Elongation factor 4 (596 aa).

Positions 2 to 184 (KNIRNFSIIA…TIVKNIPSPA (183 aa)) constitute a tr-type G domain. GTP is bound by residues 14–19 (DHGKST) and 131–134 (NKID).

This sequence belongs to the TRAFAC class translation factor GTPase superfamily. Classic translation factor GTPase family. LepA subfamily.

The protein resides in the cell inner membrane. The catalysed reaction is GTP + H2O = GDP + phosphate + H(+). In terms of biological role, required for accurate and efficient protein synthesis under certain stress conditions. May act as a fidelity factor of the translation reaction, by catalyzing a one-codon backward translocation of tRNAs on improperly translocated ribosomes. Back-translocation proceeds from a post-translocation (POST) complex to a pre-translocation (PRE) complex, thus giving elongation factor G a second chance to translocate the tRNAs correctly. Binds to ribosomes in a GTP-dependent manner. The protein is Elongation factor 4 of Colwellia psychrerythraea (strain 34H / ATCC BAA-681) (Vibrio psychroerythus).